The primary structure comprises 387 residues: Cyclin-B1-4 (387 aa).

Residues 1 to 29 (MASSRVSDLPHQRGIAGEIKPKNVAGHGR) are disordered.

This sequence belongs to the cyclin family. Cyclin AB subfamily.

This Arabidopsis thaliana (Mouse-ear cress) protein is Cyclin-B1-4 (CYCB1-4).